A 264-amino-acid polypeptide reads, in one-letter code: 4-oxalocrotonate decarboxylase (264 aa).

The protein belongs to the hydratase/decarboxylase family.

The enzyme catalyses (3E)-2-oxohex-3-enedioate + H(+) = 2-oxopent-4-enoate + CO2. Its pathway is aromatic compound metabolism; benzoate degradation via hydroxylation. This Pseudomonas sp. (strain CF600) protein is 4-oxalocrotonate decarboxylase (dmpH).